Consider the following 541-residue polypeptide: MAKMLKFGEDARRSMQIGVDKLADTVKVTLGPKGRNVVLDKKFGAPLITNDGVSIAREIELEDPYENMGAQLVKEVATKTNDVAGDGTTTATLLAQAIIREGLKNVTAGANPILIRTGIKMAVDKAVEEIQKISKQVDGKEDIARVAAISAADEEVGKLIADAMEKVGNEGVITIEESKSMGTELDVVEGMQFDRGYVSPYMATDTEKMEAVLENPYILITDKKISNIQEILPVLEQIVQSGKKLLIIAEDIEGEAMATLVVNKLRGTFTCVAVKAPGFGDRRKEMLQDIATLTGGTVIAEELGRELKDVTIDMLGTADSVKVSKENTVIVNGKGDSNAIKERINQIKAQIEETSSEFDKEKLQERLAKLAGGVAVIKVGAATETELKEKKLRIEDALAATKAAVEEGIVAGGGTAYVNVINEVAKLTSDVADTQIGINIIVKSLEEPVRQIATNAGVEGSVIIEKVKNSEPGIGYDALHGEYINMIKGGIVDPTKVTRSALQNAASVASTFLTTEAAVADIPAKETPMPGAPGMGMDGMY.

Residues 29–32 (TLGP), 86–90 (DGTTT), glycine 413, 477–479 (DAL), and aspartate 493 each bind ATP.

The protein belongs to the chaperonin (HSP60) family. Forms a cylinder of 14 subunits composed of two heptameric rings stacked back-to-back. Interacts with the co-chaperonin GroES.

It localises to the cytoplasm. It catalyses the reaction ATP + H2O + a folded polypeptide = ADP + phosphate + an unfolded polypeptide.. Its function is as follows. Together with its co-chaperonin GroES, plays an essential role in assisting protein folding. The GroEL-GroES system forms a nano-cage that allows encapsulation of the non-native substrate proteins and provides a physical environment optimized to promote and accelerate protein folding. The protein is Chaperonin GroEL of Clostridium beijerinckii (strain ATCC 51743 / NCIMB 8052) (Clostridium acetobutylicum).